Here is a 408-residue protein sequence, read N- to C-terminus: Translation initiation factor 2 subunit gamma (408 aa).

Residues 4–201 (QSEINIGLVG…TIEERIKTPK (198 aa)) enclose the tr-type G domain. The G1 stretch occupies residues 13 to 20 (GHVDHGKT). Residues D16, T20, G41, and S43 each coordinate Mg(2+). 16-21 (DHGKTT) serves as a coordination point for GTP. The interval 41–45 (GISIR) is G2. Zn(2+) contacts are provided by C56, C59, C71, and C74. A G3 region spans residues 88–91 (DAPG). GTP is bound by residues 144 to 147 (NKID) and 179 to 181 (SAQ). Positions 144-147 (NKID) are G4. The tract at residues 179–181 (SAQ) is G5.

It belongs to the TRAFAC class translation factor GTPase superfamily. Classic translation factor GTPase family. EIF2G subfamily. In terms of assembly, heterotrimer composed of an alpha, a beta and a gamma chain. Requires Mg(2+) as cofactor.

It carries out the reaction GTP + H2O = GDP + phosphate + H(+). Functionally, eIF-2 functions in the early steps of protein synthesis by forming a ternary complex with GTP and initiator tRNA. The polypeptide is Translation initiation factor 2 subunit gamma (Methanothermobacter thermautotrophicus (strain ATCC 29096 / DSM 1053 / JCM 10044 / NBRC 100330 / Delta H) (Methanobacterium thermoautotrophicum)).